The primary structure comprises 179 residues: Ribosome maturation factor RimM (179 aa).

The 77-residue stretch at 100-176 folds into the PRC barrel domain; sequence KEEFHLLELI…FLIINPPNGL (77 aa).

The protein belongs to the RimM family. In terms of assembly, binds ribosomal protein uS19.

The protein resides in the cytoplasm. An accessory protein needed during the final step in the assembly of 30S ribosomal subunit, possibly for assembly of the head region. Essential for efficient processing of 16S rRNA. May be needed both before and after RbfA during the maturation of 16S rRNA. It has affinity for free ribosomal 30S subunits but not for 70S ribosomes. The chain is Ribosome maturation factor RimM from Prochlorococcus marinus (strain AS9601).